Reading from the N-terminus, the 126-residue chain is Holo-[acyl-carrier-protein] synthase (126 aa).

2 residues coordinate Mg(2+): Asp9 and Glu58.

This sequence belongs to the P-Pant transferase superfamily. AcpS family. The cofactor is Mg(2+).

It localises to the cytoplasm. It catalyses the reaction apo-[ACP] + CoA = holo-[ACP] + adenosine 3',5'-bisphosphate + H(+). Functionally, transfers the 4'-phosphopantetheine moiety from coenzyme A to a Ser of acyl-carrier-protein. This Salmonella choleraesuis (strain SC-B67) protein is Holo-[acyl-carrier-protein] synthase.